The primary structure comprises 148 residues: UPF0251 protein Cbei_2962 (148 aa).

It belongs to the UPF0251 family.

The polypeptide is UPF0251 protein Cbei_2962 (Clostridium beijerinckii (strain ATCC 51743 / NCIMB 8052) (Clostridium acetobutylicum)).